Reading from the N-terminus, the 692-residue chain is Elongation factor G (692 aa).

Positions Asn-8–Thr-283 constitute a tr-type G domain. GTP is bound by residues Ala-17–Thr-24, Asp-81–His-85, and Asn-135–Asp-138.

It belongs to the TRAFAC class translation factor GTPase superfamily. Classic translation factor GTPase family. EF-G/EF-2 subfamily.

It localises to the cytoplasm. In terms of biological role, catalyzes the GTP-dependent ribosomal translocation step during translation elongation. During this step, the ribosome changes from the pre-translocational (PRE) to the post-translocational (POST) state as the newly formed A-site-bound peptidyl-tRNA and P-site-bound deacylated tRNA move to the P and E sites, respectively. Catalyzes the coordinated movement of the two tRNA molecules, the mRNA and conformational changes in the ribosome. The protein is Elongation factor G of Helicobacter pylori (strain HPAG1).